A 101-amino-acid polypeptide reads, in one-letter code: AFA-III adhesin operon regulatory protein (101 aa).

In terms of biological role, regulates the transcription of genes involved in the biosynthesis of afimbrial adhesin-III. The polypeptide is AFA-III adhesin operon regulatory protein (afaA) (Escherichia coli).